Reading from the N-terminus, the 92-residue chain is Phosphoribosyl-ATP pyrophosphatase (92 aa).

This sequence belongs to the PRA-PH family.

The protein resides in the cytoplasm. It catalyses the reaction 1-(5-phospho-beta-D-ribosyl)-ATP + H2O = 1-(5-phospho-beta-D-ribosyl)-5'-AMP + diphosphate + H(+). It functions in the pathway amino-acid biosynthesis; L-histidine biosynthesis; L-histidine from 5-phospho-alpha-D-ribose 1-diphosphate: step 2/9. In Leptospira borgpetersenii serovar Hardjo-bovis (strain JB197), this protein is Phosphoribosyl-ATP pyrophosphatase.